Consider the following 298-residue polypeptide: Protoheme IX farnesyltransferase (298 aa).

9 helical membrane passes run V26–P46, F52–L72, V98–N118, L120–L140, I148–G168, A174–I194, I214–M234, S241–I261, and Y278–L298.

It belongs to the UbiA prenyltransferase family. Protoheme IX farnesyltransferase subfamily.

Its subcellular location is the cell inner membrane. It catalyses the reaction heme b + (2E,6E)-farnesyl diphosphate + H2O = Fe(II)-heme o + diphosphate. The protein operates within porphyrin-containing compound metabolism; heme O biosynthesis; heme O from protoheme: step 1/1. Its function is as follows. Converts heme B (protoheme IX) to heme O by substitution of the vinyl group on carbon 2 of heme B porphyrin ring with a hydroxyethyl farnesyl side group. The sequence is that of Protoheme IX farnesyltransferase from Methylococcus capsulatus (strain ATCC 33009 / NCIMB 11132 / Bath).